The primary structure comprises 483 residues: UDP-N-acetylmuramate--L-alanine ligase (483 aa).

ATP is bound at residue 128-134 (GTHGKTT).

Belongs to the MurCDEF family.

It is found in the cytoplasm. The catalysed reaction is UDP-N-acetyl-alpha-D-muramate + L-alanine + ATP = UDP-N-acetyl-alpha-D-muramoyl-L-alanine + ADP + phosphate + H(+). Its pathway is cell wall biogenesis; peptidoglycan biosynthesis. Functionally, cell wall formation. In Shewanella violacea (strain JCM 10179 / CIP 106290 / LMG 19151 / DSS12), this protein is UDP-N-acetylmuramate--L-alanine ligase.